The following is a 195-amino-acid chain: MDSEVSNGSGLGAEHITDLLVFGFLQSSGCTRQELEVLGRELPVQAYWEADLEDELQTDGSQASRSFNQGRIEPDSESQEEIIHNIARHLAQIGDEMDHNIQPTLVRQLAAQFMNGSLSEEDKRNCLAKALDEVKTAFPRDMENDKAMLIMTMLLAKKVASHAPSLLRDVFHTTVNFINQNLFSYVRNLVRNEMD.

Met-1 carries the N-acetylmethionine modification. A compositionally biased stretch (polar residues) spans 58 to 69 (TDGSQASRSFNQ). The interval 58-77 (TDGSQASRSFNQGRIEPDSE) is disordered. Phosphoserine is present on Ser-78. The short motif at 87 to 100 (ARHLAQIGDEMDHN) is the BH3 element.

Forms heterodimers either with the pro-apoptotic protein BAX or the anti-apoptotic protein BCL2. Interacts with PLEKHN1. As to quaternary structure, interacts with ITCH. Interacts with MTCH2. TNF-alpha induces caspase-mediated cleavage into a major p15 and minor p13 and p11 products. Cleaved by CASP6 into a major p15 and minor p13 products, leading to release of cytochrome c and subsequent nonalcoholic steatohepatitis. Post-translationally, ubiquitinated by ITCH; ubiquitination results in proteasome-dependent degradation.

The protein resides in the cytoplasm. It is found in the mitochondrion membrane. It localises to the mitochondrion outer membrane. Functionally, induces caspases and apoptosis. Counters the protective effect of BCL2. Its function is as follows. Induces caspase activation and apoptosis. Allows the release of cytochrome c. This Mus musculus (Mouse) protein is BH3-interacting domain death agonist (Bid).